A 1338-amino-acid polypeptide reads, in one-letter code: Serine/threonine-protein kinase cek1 (1338 aa).

The PAS domain maps to 28–98 (SKDENLQPSI…RAVNCLLKDD (71 aa)). Residues 484–554 (PDFAIGSPMS…GRSSLFSRGR (71 aa)) form a disordered region. Residues 491–501 (PMSQDSSNYSS) show a composition bias toward polar residues. At Ser525 the chain carries Phosphoserine. Over residues 541–550 (PASNGRSSLF) the composition is skewed to polar residues. One can recognise a Protein kinase domain in the interval 589–958 (YKILKPISKG…VEEIKAHPFF (370 aa)). ATP contacts are provided by residues 595–603 (ISKGAFGSV) and Lys618. Asp713 functions as the Proton acceptor in the catalytic mechanism. Ser748 bears the Phosphoserine mark. The segment covering 813–842 (ENSAEDSPTATNTPTSQVDESNIFRSTDSP) has biased composition (polar residues). Disordered stretches follow at residues 813-844 (ENSAEDSPTATNTPTSQVDESNIFRSTDSPRV), 1010-1035 (KLEEERPASSIPQHVSGNRKGRLRSN), and 1159-1185 (SSTMSASQSQSSMHTALPDVTEGTSSD). The AGC-kinase C-terminal domain maps to 959–1057 (KSVNWDTILE…RNLDFLNKAN (99 aa)). The span at 1159-1174 (SSTMSASQSQSSMHTA) shows a compositional bias: low complexity. Ser1211 bears the Phosphoserine mark.

Belongs to the protein kinase superfamily. Ser/Thr protein kinase family.

The enzyme catalyses L-seryl-[protein] + ATP = O-phospho-L-seryl-[protein] + ADP + H(+). It carries out the reaction L-threonyl-[protein] + ATP = O-phospho-L-threonyl-[protein] + ADP + H(+). May facilitate the progression of anaphase through direct or indirect interaction with the cut8 protein. The chain is Serine/threonine-protein kinase cek1 (cek1) from Schizosaccharomyces pombe (strain 972 / ATCC 24843) (Fission yeast).